The sequence spans 156 residues: 6,7-dimethyl-8-ribityllumazine synthase (156 aa).

5-amino-6-(D-ribitylamino)uracil-binding positions include phenylalanine 22, 57–59 (AYE), and 81–83 (TVI). 86-87 (GT) contributes to the (2S)-2-hydroxy-3-oxobutyl phosphate binding site. Histidine 89 functions as the Proton donor in the catalytic mechanism. Phenylalanine 114 lines the 5-amino-6-(D-ribitylamino)uracil pocket. Arginine 128 provides a ligand contact to (2S)-2-hydroxy-3-oxobutyl phosphate.

The protein belongs to the DMRL synthase family. In terms of assembly, forms an icosahedral capsid composed of 60 subunits, arranged as a dodecamer of pentamers.

The enzyme catalyses (2S)-2-hydroxy-3-oxobutyl phosphate + 5-amino-6-(D-ribitylamino)uracil = 6,7-dimethyl-8-(1-D-ribityl)lumazine + phosphate + 2 H2O + H(+). The protein operates within cofactor biosynthesis; riboflavin biosynthesis; riboflavin from 2-hydroxy-3-oxobutyl phosphate and 5-amino-6-(D-ribitylamino)uracil: step 1/2. Functionally, catalyzes the formation of 6,7-dimethyl-8-ribityllumazine by condensation of 5-amino-6-(D-ribitylamino)uracil with 3,4-dihydroxy-2-butanone 4-phosphate. This is the penultimate step in the biosynthesis of riboflavin. The sequence is that of 6,7-dimethyl-8-ribityllumazine synthase from Salmonella agona (strain SL483).